Consider the following 180-residue polypeptide: Large ribosomal subunit protein uL6 (180 aa).

It belongs to the universal ribosomal protein uL6 family. In terms of assembly, part of the 50S ribosomal subunit.

This protein binds to the 23S rRNA, and is important in its secondary structure. It is located near the subunit interface in the base of the L7/L12 stalk, and near the tRNA binding site of the peptidyltransferase center. This is Large ribosomal subunit protein uL6 from Salinispora arenicola (strain CNS-205).